A 190-amino-acid chain; its full sequence is Inner membrane-spanning protein YciB (190 aa).

6 helical membrane-spanning segments follow: residues 3–23 (FLFD…AGIY), 24–44 (VATT…WFKH), 49–69 (AMQW…LIFH), 76–96 (WKPT…VVVV), 121–141 (LVWA…AYNF), and 149–169 (FKLF…SVWL).

It belongs to the YciB family.

The protein localises to the cell inner membrane. Its function is as follows. Plays a role in cell envelope biogenesis, maintenance of cell envelope integrity and membrane homeostasis. The polypeptide is Inner membrane-spanning protein YciB (Ralstonia pickettii (strain 12J)).